A 282-amino-acid polypeptide reads, in one-letter code: NADPH-dependent 7-cyano-7-deazaguanine reductase (282 aa).

88–90 (IES) is a substrate binding site. An NADPH-binding site is contributed by 90–91 (SK). Cys-190 serves as the catalytic Thioimide intermediate. The active-site Proton donor is Asp-197. Position 229-230 (229-230 (HE)) interacts with substrate. Position 258 to 259 (258 to 259 (RG)) interacts with NADPH.

The protein belongs to the GTP cyclohydrolase I family. QueF type 2 subfamily. As to quaternary structure, homodimer.

The protein localises to the cytoplasm. It carries out the reaction 7-aminomethyl-7-carbaguanine + 2 NADP(+) = 7-cyano-7-deazaguanine + 2 NADPH + 3 H(+). It participates in tRNA modification; tRNA-queuosine biosynthesis. In terms of biological role, catalyzes the NADPH-dependent reduction of 7-cyano-7-deazaguanine (preQ0) to 7-aminomethyl-7-deazaguanine (preQ1). The protein is NADPH-dependent 7-cyano-7-deazaguanine reductase of Salmonella arizonae (strain ATCC BAA-731 / CDC346-86 / RSK2980).